The sequence spans 198 residues: Probable host range protein 2 (198 aa).

Residues 171 to 198 form a disordered region; the sequence is SDDDDDNDNADDDEEDDDEVNDIEDDYE.

The protein belongs to the poxviridae C7 protein family.

Its function is as follows. Plays a role for multiplication of the virus in different cell types. This chain is Probable host range protein 2, found in Bos taurus (Bovine).